A 951-amino-acid chain; its full sequence is Cadmium/zinc-transporting ATPase HMA2 (951 aa).

The Cytoplasmic portion of the chain corresponds to 1-83 (MASKKMTKSY…VRVTGETNFK (83 aa)). The HMA domain maps to 7-73 (TKSYFDVLGI…ALNQAQLEAN (67 aa)). The chain crosses the membrane as a helical span at residues 84–105 (NKWPSPFAVVSGILLLLSFFKY). At 106–108 (LYS) the chain is on the extracellular side. A helical transmembrane segment spans residues 109 to 128 (PFRWLAVAAVVAGIYPILAK). The Cytoplasmic segment spans residues 129 to 135 (AVASLAR). A helical membrane pass occupies residues 136–156 (FRIDINILVVVTVGATIGMQD). Residue Tyr-157 is a topological domain, extracellular. Residues 158-178 (TEAAVVVFLFTIAEWLQSRAS) form a helical membrane-spanning segment. Residues 179–304 (YKASAVMQSL…KTETQRFIDK (126 aa)) are Cytoplasmic-facing. A helical membrane pass occupies residues 305-327 (CSKYYTPAIILISICFVAIPFAL). Residues 328 to 335 (KVHNLKHW) lie on the Extracellular side of the membrane. A helical transmembrane segment spans residues 336–353 (VHLALVVLVSACPCGLIL). Over 354–647 (STPVATFCAL…KLAKRAKRKV (294 aa)) the chain is Cytoplasmic. The active-site 4-aspartylphosphate intermediate is the Asp-391. Residues Asp-592 and Asp-596 each contribute to the Mg(2+) site. Residues 648–667 (VENVVISITMKGAILALAFA) form a helical membrane-spanning segment. Residues 668 to 671 (GHPL) lie on the Extracellular side of the membrane. Residues 672–691 (IWAAVLADVGTCLLVILNSM) traverse the membrane as a helical segment. Residues 692 to 951 (LLLSDKHKTG…VGTLKEIVIE (260 aa)) lie on the Cytoplasmic side of the membrane. Residues 841-851 (ELQQSCHDKPS) are compositionally biased toward basic and acidic residues. The interval 841 to 866 (ELQQSCHDKPSGLDIGTGPKHEGSST) is disordered.

This sequence belongs to the cation transport ATPase (P-type) (TC 3.A.3) family. Type IB subfamily. Predominantly expressed in the vascular tissues of roots, stems, and leaves. Also detected in developing anthers.

The protein resides in the cell membrane. The enzyme catalyses Zn(2+)(in) + ATP + H2O = Zn(2+)(out) + ADP + phosphate + H(+). The catalysed reaction is Cd(2+)(in) + ATP + H2O = Cd(2+)(out) + ADP + phosphate + H(+). Plays an important role in zinc transport and homeostasis. Could also be involved in cadmium detoxification. This is Cadmium/zinc-transporting ATPase HMA2 (HMA2) from Arabidopsis thaliana (Mouse-ear cress).